The chain runs to 38 residues: Kappa-theraphotoxin-Hm2a (38 aa).

Cystine bridges form between Cys2/Cys16, Cys9/Cys21, and Cys15/Cys32. Phe38 is subject to Phenylalanine amide.

It belongs to the neurotoxin 10 (Hwtx-1) family. 13 (Hntx-13) subfamily. As to expression, expressed by the venom gland.

It is found in the secreted. In terms of biological role, inhibitor of voltage-gated potassium channels. It specifically inhibits Kv2.1/KCNB1 channels. The polypeptide is Kappa-theraphotoxin-Hm2a (Heteroscodra maculata (Togo starburst tarantula)).